The sequence spans 465 residues: Cysteine--tRNA ligase (465 aa).

C27 serves as a coordination point for Zn(2+). Residues 29-39 (PTVYDDAHLGH) carry the 'HIGH' region motif. Zn(2+) contacts are provided by C207, H237, and E241. A 'KMSKS' region motif is present at residues 269 to 273 (KMSKS). ATP is bound at residue K272.

It belongs to the class-I aminoacyl-tRNA synthetase family. Monomer. Zn(2+) is required as a cofactor.

The protein localises to the cytoplasm. The catalysed reaction is tRNA(Cys) + L-cysteine + ATP = L-cysteinyl-tRNA(Cys) + AMP + diphosphate. The polypeptide is Cysteine--tRNA ligase (Helicobacter pylori (strain HPAG1)).